The primary structure comprises 209 residues: Eukaryotic translation initiation factor 4E (209 aa).

MRNA-binding positions include 51–52, 97–98, and 153–158; these read WH, WE, and RKQAYR.

This sequence belongs to the eukaryotic initiation factor 4E family. In terms of assembly, eIF4F is a multi-subunit complex, the composition of which varies with external and internal environmental conditions. It is composed of at least eIF4A, eIF4E and eIF4G. eIF4E is also known to interact with other partners.

Recognizes and binds the 7-methylguanosine-containing mRNA cap during an early step in the initiation of protein synthesis and facilitates ribosome binding by inducing the unwinding of the mRNAs secondary structures. The polypeptide is Eukaryotic translation initiation factor 4E (TIF45) (Candida albicans (strain SC5314 / ATCC MYA-2876) (Yeast)).